Consider the following 280-residue polypeptide: MDDDEFVFIESNPTQSTWVDVKKSQQQQQQQPQAPPQQQQQQILPVYRNLNPLVDENDGFTYQQQQLYLQQQQQFCQQQLLLEQQQQQQLLLKQQQQQLLLEQQQQQLLLKQQKQQLLLEQQLLLEQRQQQQQKVPIPIAQVPASTLVVESKQEEKIQEEQEVPVIVSIINSPPPPQEEEKPQLSKKEEPEWLKGKDKAPYISTSTSDVKYTSNVVSNKPYTTIKSSTSYSSVSGSGGSGIRRISLAELNGNSKPYTSSNATNKPFTTASKSTNSYSFSF.

Disordered stretches follow at residues 20 to 41 (DVKK…QQQQ), 170 to 199 (INSP…KDKA), and 251 to 280 (GNSK…SFSF). Residues 25 to 41 (QQQQQQQPQAPPQQQQQ) are compositionally biased toward low complexity. Residues 178–199 (EEEKPQLSKKEEPEWLKGKDKA) show a composition bias toward basic and acidic residues.

This is an uncharacterized protein from Dictyostelium discoideum (Social amoeba).